The chain runs to 429 residues: Gamma-glutamyl phosphate reductase (429 aa).

The protein belongs to the gamma-glutamyl phosphate reductase family.

The protein resides in the cytoplasm. It catalyses the reaction L-glutamate 5-semialdehyde + phosphate + NADP(+) = L-glutamyl 5-phosphate + NADPH + H(+). It functions in the pathway amino-acid biosynthesis; L-proline biosynthesis; L-glutamate 5-semialdehyde from L-glutamate: step 2/2. In terms of biological role, catalyzes the NADPH-dependent reduction of L-glutamate 5-phosphate into L-glutamate 5-semialdehyde and phosphate. The product spontaneously undergoes cyclization to form 1-pyrroline-5-carboxylate. The chain is Gamma-glutamyl phosphate reductase from Nocardioides sp. (strain ATCC BAA-499 / JS614).